The sequence spans 300 residues: Nucleotide-binding protein Dshi_0209 (300 aa).

An ATP-binding site is contributed by 20 to 27 (GPSGAGRT). 67-70 (DART) contacts GTP.

The protein belongs to the RapZ-like family.

Its function is as follows. Displays ATPase and GTPase activities. The polypeptide is Nucleotide-binding protein Dshi_0209 (Dinoroseobacter shibae (strain DSM 16493 / NCIMB 14021 / DFL 12)).